Here is a 301-residue protein sequence, read N- to C-terminus: Methionyl-tRNA formyltransferase (301 aa).

109–112 (SLLP) serves as a coordination point for (6S)-5,6,7,8-tetrahydrofolate.

This sequence belongs to the Fmt family.

It carries out the reaction L-methionyl-tRNA(fMet) + (6R)-10-formyltetrahydrofolate = N-formyl-L-methionyl-tRNA(fMet) + (6S)-5,6,7,8-tetrahydrofolate + H(+). Functionally, attaches a formyl group to the free amino group of methionyl-tRNA(fMet). The formyl group appears to play a dual role in the initiator identity of N-formylmethionyl-tRNA by promoting its recognition by IF2 and preventing the misappropriation of this tRNA by the elongation apparatus. This is Methionyl-tRNA formyltransferase from Jannaschia sp. (strain CCS1).